Here is a 232-residue protein sequence, read N- to C-terminus: Very-long-chain (3R)-3-hydroxyacyl-CoA dehydratase 4 (232 aa).

Over 1–19 (MGPSVLPAWLQPRYRKNVY) the chain is Cytoplasmic. The chain crosses the membrane as a helical span at residues 20-40 (LFIYYLIQFCGHSWILANMTV). The Lumenal portion of the chain corresponds to 41–56 (RFFSFGKDSMADTFYA). The helical transmembrane segment at 57–77 (IGLVMRVCQSISLLELLHIYI) threads the bilayer. Residues 78–112 (GIESNQLFPRFLQLTERVIILFGVITSQEEVQEKC) are Cytoplasmic-facing. The helical transmembrane segment at 113 to 133 (VVCVLFILWNLLDMVRYTYSM) threads the bilayer. Residues 134-135 (LS) lie on the Lumenal side of the membrane. Residues 136–156 (VIGTSYAALTWLSQTLWMPIY) form a helical membrane-spanning segment. Y156 is a catalytic residue. Residue P157 is a topological domain, cytoplasmic. A helical transmembrane segment spans residues 158–178 (LCVLAEAFTIYQSLPYFESFG). Residue E163 is part of the active site. Residues 179 to 189 (TNSTVLPFDLS) lie on the Lumenal side of the membrane. The helical transmembrane segment at 190 to 210 (TCFPYVLKLYLMMLFIGMYFT) threads the bilayer. Residues 211–232 (YSHLYTERKDFLRVFSVKQKNV) are Cytoplasmic-facing.

This sequence belongs to the very long-chain fatty acids dehydratase HACD family. In terms of assembly, may interact with enzymes of the ELO family (including ELOVL1); with those enzymes that mediate condensation, the first of the four steps of the reaction cycle responsible for fatty acids elongation, may be part of a larger fatty acids elongase complex.

It localises to the endoplasmic reticulum membrane. The enzyme catalyses a very-long-chain (3R)-3-hydroxyacyl-CoA = a very-long-chain (2E)-enoyl-CoA + H2O. It catalyses the reaction (3R)-hydroxyhexadecanoyl-CoA = (2E)-hexadecenoyl-CoA + H2O. It participates in lipid metabolism; fatty acid biosynthesis. In terms of biological role, catalyzes the third of the four reactions of the long-chain fatty acids elongation cycle. This endoplasmic reticulum-bound enzymatic process, allows the addition of two carbons to the chain of long- and very long-chain fatty acids/VLCFAs per cycle. This enzyme catalyzes the dehydration of the 3-hydroxyacyl-CoA intermediate into trans-2,3-enoyl-CoA, within each cycle of fatty acid elongation. Thereby, it participates in the production of VLCFAs of different chain lengths that are involved in multiple biological processes as precursors of membrane lipids and lipid mediators. This chain is Very-long-chain (3R)-3-hydroxyacyl-CoA dehydratase 4, found in Mus musculus (Mouse).